Reading from the N-terminus, the 452-residue chain is Probable cysteine protease RD21C (452 aa).

A signal peptide spans 1–29 (MATSIKSITLALLIFSVLLISLSLGSVTA). The propeptide at 30 to 128 (TETTRNEAEA…EKYLYKVGDS (99 aa)) is activation peptide. A glycan (N-linked (GlcNAc...) asparagine) is linked at Asn82. Disulfide bonds link Cys150–Cys192, Cys184–Cys226, Cys284–Cys335, Cys363–Cys375, and Cys369–Cys390. The active site involves Cys153. Residues His290 and Asn310 contribute to the active site. A propeptide spans 346–452 (KSSGSNPPKP…KSTNMLVGSA (107 aa)) (removed in mature form).

The protein belongs to the peptidase C1 family. Interacts with WSCP.

Its function is as follows. Probable thiol protease. This is Probable cysteine protease RD21C from Arabidopsis thaliana (Mouse-ear cress).